Reading from the N-terminus, the 278-residue chain is MKKNRAFLKWAGGKYPLLDDIKRHLPKGECLVEPFVGAGSVFLNTDFSRYILADINSDLISLYNIVKLRTDEYVQASRELFMPETNQAEVYYQLREEFNTCQDPFRRAVLFLYLNRYGYNGLCRYNLRGEFNVPFGRYKRPYFPEAELYHFAEKAQNAFFYCESYADSMARADKSSVVYCDPPYAPLSATANFTAYHTNSFSLTQQAHLAEIAENLVSNRIPVLISNHDTALTREWYQLAKLHVVKVRRSISSNGGTRKKVDELLALYQPGVATPARK.

The S-adenosyl-L-methionine site is built by Trp10, Lys14, Asp54, and Asp181.

The protein belongs to the N(4)/N(6)-methyltransferase family.

The catalysed reaction is a 2'-deoxyadenosine in DNA + S-adenosyl-L-methionine = an N(6)-methyl-2'-deoxyadenosine in DNA + S-adenosyl-L-homocysteine + H(+). In terms of biological role, an alpha subtype methylase, recognizes the double-stranded sequence 5'-GATC-3' and methylates A-2. May be involved in methyl-directed DNA mismatch repair, initiation of chromosome replication and gene expression. The chain is DNA adenine methylase (dam) from Salmonella typhi.